The primary structure comprises 429 residues: Threonine synthase (429 aa).

N6-(pyridoxal phosphate)lysine is present on K107.

This sequence belongs to the threonine synthase family. The cofactor is pyridoxal 5'-phosphate.

It carries out the reaction O-phospho-L-homoserine + H2O = L-threonine + phosphate. It participates in amino-acid biosynthesis; L-threonine biosynthesis; L-threonine from L-aspartate: step 5/5. Its function is as follows. Catalyzes the gamma-elimination of phosphate from L-phosphohomoserine and the beta-addition of water to produce L-threonine. The polypeptide is Threonine synthase (thrC) (Serratia marcescens).